Here is a 350-residue protein sequence, read N- to C-terminus: 3-methylornithine synthase (350 aa).

The 223-residue stretch at 57–279 folds into the Radical SAM core domain; it reads NRVFLNCFIY…PKRLIPASLD (223 aa). 2 residues coordinate [4Fe-4S] cluster: Cys-71 and Cys-75. Phe-77 is an S-adenosyl-L-methionine binding site. [4Fe-4S] cluster is bound at residue Cys-78. Residues Asp-112, Ser-146, and Tyr-169 each contribute to the (3R)-3-methyl-D-ornithine site. Residues Glu-171, Arg-182, and Arg-190 each coordinate S-adenosyl-L-methionine. Arg-235 is a (3R)-3-methyl-D-ornithine binding site. S-adenosyl-L-methionine-binding residues include Leu-240 and Gln-242. The (3R)-3-methyl-D-ornithine site is built by Ser-277, Thr-298, and Ser-299.

This sequence belongs to the radical SAM superfamily. PylB family. [4Fe-4S] cluster serves as cofactor. S-adenosyl-L-methionine is required as a cofactor.

The catalysed reaction is L-lysine = (3R)-3-methyl-D-ornithine. Its pathway is amino-acid biosynthesis; L-pyrrolysine biosynthesis. Catalyzes the isomerization of L-lysine to (3R)-3-methyl-D-ornithine via a radical-based mechanism, a step in the biosynthesis pathway of pyrrolysine. Also catalyzes the reverse reaction in vitro, converting (3R)-3-methyl-D-ornithine into L-lysine. The protein is 3-methylornithine synthase of Methanosarcina barkeri (strain Fusaro / DSM 804).